The following is a 379-amino-acid chain: UDP-N-acetylglucosamine--N-acetylmuramyl-(pentapeptide) pyrophosphoryl-undecaprenol N-acetylglucosamine transferase (379 aa).

UDP-N-acetyl-alpha-D-glucosamine is bound by residues 17–19 (TGG), asparagine 128, arginine 169, serine 197, and glutamine 298.

The protein belongs to the glycosyltransferase 28 family. MurG subfamily.

Its subcellular location is the cell inner membrane. The enzyme catalyses di-trans,octa-cis-undecaprenyl diphospho-N-acetyl-alpha-D-muramoyl-L-alanyl-D-glutamyl-meso-2,6-diaminopimeloyl-D-alanyl-D-alanine + UDP-N-acetyl-alpha-D-glucosamine = di-trans,octa-cis-undecaprenyl diphospho-[N-acetyl-alpha-D-glucosaminyl-(1-&gt;4)]-N-acetyl-alpha-D-muramoyl-L-alanyl-D-glutamyl-meso-2,6-diaminopimeloyl-D-alanyl-D-alanine + UDP + H(+). The protein operates within cell wall biogenesis; peptidoglycan biosynthesis. Cell wall formation. Catalyzes the transfer of a GlcNAc subunit on undecaprenyl-pyrophosphoryl-MurNAc-pentapeptide (lipid intermediate I) to form undecaprenyl-pyrophosphoryl-MurNAc-(pentapeptide)GlcNAc (lipid intermediate II). This chain is UDP-N-acetylglucosamine--N-acetylmuramyl-(pentapeptide) pyrophosphoryl-undecaprenol N-acetylglucosamine transferase, found in Brucella suis biovar 1 (strain 1330).